The sequence spans 67 residues: Conotoxin Cl6.6b (67 aa).

The first 24 residues, 1-24 (MKLTCVLIAAVLLLAVCQLDSADA), serve as a signal peptide directing secretion. Positions 25 to 37 (TGYMRKNPSLRSP) are excised as a propeptide. 3 disulfides stabilise this stretch: cysteine 43–cysteine 57, cysteine 50–cysteine 61, and cysteine 56–cysteine 65.

Belongs to the conotoxin O1 superfamily. Expressed by the venom duct.

Its subcellular location is the secreted. The chain is Conotoxin Cl6.6b from Californiconus californicus (California cone).